Consider the following 403-residue polypeptide: Large ribosomal subunit protein uL3 (403 aa).

A disordered region spans residues 1–38 (MSHRKFSAPRHGSLGFLPRKRSSRHRGKVKSFPKDDSS). Phosphoserine is present on Ser13. Residues 18–31 (PRKRSSRHRGKVKS) show a composition bias toward basic residues. Lys39 participates in a covalent cross-link: Glycyl lysine isopeptide (Lys-Gly) (interchain with G-Cter in SUMO2). At Lys136 the chain carries N6-acetyllysine. Glycyl lysine isopeptide (Lys-Gly) (interchain with G-Cter in SUMO2) cross-links involve residues Lys224 and Lys226. A Tele-methylhistidine modification is found at His245. Lys286 and Lys294 each carry N6-acetyllysine; alternate. Lys286 participates in a covalent cross-link: Glycyl lysine isopeptide (Lys-Gly) (interchain with G-Cter in SUMO2); alternate. Residue Lys294 forms a Glycyl lysine isopeptide (Lys-Gly) (interchain with G-Cter in SUMO1); alternate linkage. The residue at position 304 (Ser304) is a Phosphoserine. Residue Lys366 is modified to N6-acetyllysine; alternate. Lys366 participates in a covalent cross-link: Glycyl lysine isopeptide (Lys-Gly) (interchain with G-Cter in SUMO2); alternate. An N6-acetyllysine modification is found at Lys373. Residues Lys386, Lys393, and Lys399 each participate in a glycyl lysine isopeptide (Lys-Gly) (interchain with G-Cter in SUMO2) cross-link.

This sequence belongs to the universal ribosomal protein uL3 family. In terms of assembly, component of the large ribosomal subunit. Interacts with DHX33. Constitutively monomethylated at His-245 by METTL18. Methylation at His-245 regulates translation elongation by slowing ribosome traversal on tyrosine codons: slower elongation provides enough time for proper folding of synthesized proteins and prevents cellular aggregation of tyrosine-rich proteins It is not required for incorporation of RPL3 into ribosomes.

Its subcellular location is the nucleus. The protein resides in the nucleolus. It is found in the cytoplasm. Functionally, component of the large ribosomal subunit. The ribosome is a large ribonucleoprotein complex responsible for the synthesis of proteins in the cell. This Sus scrofa (Pig) protein is Large ribosomal subunit protein uL3 (RPL3).